The primary structure comprises 261 residues: Cytochrome c oxidase subunit 3 (261 aa).

At 1-15 (MTHQTHAYHMVNPSP) the chain is on the mitochondrial matrix side. A helical membrane pass occupies residues 16 to 34 (WPLTGALSALLMTSGLIMW). The Mitochondrial intermembrane segment spans residues 35-40 (FHFNSV). The chain crosses the membrane as a helical span at residues 41–66 (ALLTLGLTTNMLTMYQWWRDVIREST). Topologically, residues 67–72 (FQGHHT) are mitochondrial matrix. The chain crosses the membrane as a helical span at residues 73 to 105 (PNVQKGLRYGMILFIISEVLFFTGFFWAFYHSS). The Mitochondrial intermembrane portion of the chain corresponds to 106–128 (LAPTPELGGCWPPTGIHPLNPLE). Residues 129 to 152 (VPLLNTSVLLASGVSITWAHHSLM) traverse the membrane as a helical segment. Over 153-155 (EGN) the chain is Mitochondrial matrix. The chain crosses the membrane as a helical span at residues 156–183 (RNHMLQALFITIALGVYFTLLQASEYYE). Topologically, residues 184-190 (APFTISD) are mitochondrial intermembrane. The chain crosses the membrane as a helical span at residues 191-223 (GVYGSTFFVATGFHGLHVIIGSTFLIVCFFRQL). Over 224–232 (KFHFTSSHH) the chain is Mitochondrial matrix. A helical transmembrane segment spans residues 233 to 256 (FGFEAAAWYWHFVDVVWLFLYVSI). At 257–261 (YWWGS) the chain is on the mitochondrial intermembrane side.

This sequence belongs to the cytochrome c oxidase subunit 3 family. In terms of assembly, component of the cytochrome c oxidase (complex IV, CIV), a multisubunit enzyme composed of 14 subunits. The complex is composed of a catalytic core of 3 subunits MT-CO1, MT-CO2 and MT-CO3, encoded in the mitochondrial DNA, and 11 supernumerary subunits COX4I, COX5A, COX5B, COX6A, COX6B, COX6C, COX7A, COX7B, COX7C, COX8 and NDUFA4, which are encoded in the nuclear genome. The complex exists as a monomer or a dimer and forms supercomplexes (SCs) in the inner mitochondrial membrane with NADH-ubiquinone oxidoreductase (complex I, CI) and ubiquinol-cytochrome c oxidoreductase (cytochrome b-c1 complex, complex III, CIII), resulting in different assemblies (supercomplex SCI(1)III(2)IV(1) and megacomplex MCI(2)III(2)IV(2)).

The protein resides in the mitochondrion inner membrane. The catalysed reaction is 4 Fe(II)-[cytochrome c] + O2 + 8 H(+)(in) = 4 Fe(III)-[cytochrome c] + 2 H2O + 4 H(+)(out). Its function is as follows. Component of the cytochrome c oxidase, the last enzyme in the mitochondrial electron transport chain which drives oxidative phosphorylation. The respiratory chain contains 3 multisubunit complexes succinate dehydrogenase (complex II, CII), ubiquinol-cytochrome c oxidoreductase (cytochrome b-c1 complex, complex III, CIII) and cytochrome c oxidase (complex IV, CIV), that cooperate to transfer electrons derived from NADH and succinate to molecular oxygen, creating an electrochemical gradient over the inner membrane that drives transmembrane transport and the ATP synthase. Cytochrome c oxidase is the component of the respiratory chain that catalyzes the reduction of oxygen to water. Electrons originating from reduced cytochrome c in the intermembrane space (IMS) are transferred via the dinuclear copper A center (CU(A)) of subunit 2 and heme A of subunit 1 to the active site in subunit 1, a binuclear center (BNC) formed by heme A3 and copper B (CU(B)). The BNC reduces molecular oxygen to 2 water molecules using 4 electrons from cytochrome c in the IMS and 4 protons from the mitochondrial matrix. The chain is Cytochrome c oxidase subunit 3 (MT-CO3) from Nanger dama (Dama gazelle).